We begin with the raw amino-acid sequence, 461 residues long: Lysosomal proton-coupled steroid conjugate and bile acid symporter SLC46A3 (461 aa).

The first 25 residues, 1 to 25 (MKISFIEPAILLYAFAMTLTIPLTA), serve as a signal peptide directing secretion. Over 26 to 70 (QYVYRRIWEETGNYTFTSSSNVSECEQNKSSSTFAFQEEVQKKAS) the chain is Extracellular. N-linked (GlcNAc...) asparagine glycans are attached at residues Asn-38, Asn-46, and Asn-53. A helical transmembrane segment spans residues 71–91 (LFSLQVEISGLIPGLVSTFML). The Cytoplasmic portion of the chain corresponds to 92–103 (LSSSDNHGRKLP). A helical membrane pass occupies residues 104–124 (MVLSSLGSLGTNLWLCAMSYF). Topologically, residues 125–135 (DLPLQLLVAST) are extracellular. Residues 136–156 (FIGALFGNYTTFWGACFAYIV) traverse the membrane as a helical segment. Residues 157-170 (DQEKEYKHRIIRIA) are Cytoplasmic-facing. A helical transmembrane segment spans residues 171–191 (VLDFMLGVVTGLTGLSSGYFI). Residues 192 to 197 (RELGFA) are Extracellular-facing. The helical transmembrane segment at 198-218 (WSYFIIAVVVLVNLAYILFFL) threads the bilayer. The Cytoplasmic segment spans residues 219 to 260 (SDPIKESSSQIVTMSCSESLKDLFYRTYMLFKNGSCKRRSLL). Residues 261–281 (CLLIFTLVVYFFVVFGITPVF) form a helical membrane-spanning segment. Residues 282-301 (TLYELGPPLCWNEVYIGYGS) are Extracellular-facing. The helical transmembrane segment at 302–322 (ALGSLSFLSSFLGIWLFSYCL) threads the bilayer. Residues 323-324 (KD) are Cytoplasmic-facing. The chain crosses the membrane as a helical span at residues 325 to 345 (IHIAYVGIFTTMVGMMLTAFT). Residues 346 to 347 (RT) are Extracellular-facing. The chain crosses the membrane as a helical span at residues 348–368 (TLMMFLVRISFFFTIMPLSIL). At 369–381 (RSMLSKVVHSTEQ) the chain is on the cytoplasmic side. Residues 382-402 (GVLFACIAFLETLGGVTSTSA) form a helical membrane-spanning segment. The Extracellular segment spans residues 403–415 (YNGIYSATVAWYP). Residues 416 to 436 (GFVFLLSAGLLVLPAVSLCMV) traverse the membrane as a helical segment. The Cytoplasmic segment spans residues 437-461 (KCIGWEEGSYTLLIHDEPSEHTSDS). The Tyrosine-based lysosomal-sorting motif signature appears at 446-449 (YTLL).

Belongs to the major facilitator superfamily. SLC46A family.

The protein localises to the lysosome membrane. The catalysed reaction is estrone 3-sulfate(out) + n H(+)(out) = estrone 3-sulfate(in) + n H(+)(in). It carries out the reaction 25-hydroxyvitamin D3 sulfate(out) + n H(+)(out) = 25-hydroxyvitamin D3 sulfate(in) + n H(+)(in). It catalyses the reaction cholate(out) + n H(+)(out) = cholate(in) + n H(+)(in). The enzyme catalyses glycocholate(out) + n H(+)(out) = glycocholate(in) + n H(+)(in). The catalysed reaction is taurocholate(out) + n H(+)(out) = taurocholate(in) + n H(+)(in). It carries out the reaction dehydroepiandrosterone 3-sulfate(out) + n H(+)(out) = dehydroepiandrosterone 3-sulfate(in) + n H(+)(in). It catalyses the reaction N-acetyl-D-muramoyl-L-alanyl-D-isoglutamine(out) + n H(+)(out) = N-acetyl-D-muramoyl-L-alanyl-D-isoglutamine(in) + n H(+)(in). The enzyme catalyses 2',3'-cGAMP(out) + n H(+)(out) = 2',3'-cGAMP(in) + n H(+)(in). Its function is as follows. Lysosomal proton-coupled steroid conjugate and bile acid transporter. Preferentially recognizes lipophilic steroid conjugates or bile acis as endogenous substrates and seems to mediate escape from lysosomes to the cytoplasm. Modulates hepatic cytosolic copper homeostasis, maybe acting as a lysosomal copper transporter and sequestering copper ions in the lysosome. Delivers pathogen-associated molecular patterns to cytosolic pattern recognition receptors as part of the innate immune response to microbes. Selectively transports bacterial muramyl dipeptide (MDP) into the cytosol for recognition by NOD2, triggering inflammatory responses. Likely acts as a redundant importer of cyclic GMP-AMP dinucleotides (cGAMPs) in monocyte and macrophage cell lineages. The transport mechanism, its electrogenicity and stoichiometry remain to be elucidated. This Rattus norvegicus (Rat) protein is Lysosomal proton-coupled steroid conjugate and bile acid symporter SLC46A3 (Slc46a3).